Reading from the N-terminus, the 359-residue chain is Peptide chain release factor 1 (359 aa).

N5-methylglutamine is present on Q233.

This sequence belongs to the prokaryotic/mitochondrial release factor family. Post-translationally, methylated by PrmC. Methylation increases the termination efficiency of RF1.

Its subcellular location is the cytoplasm. Peptide chain release factor 1 directs the termination of translation in response to the peptide chain termination codons UAG and UAA. This is Peptide chain release factor 1 from Ruminiclostridium cellulolyticum (strain ATCC 35319 / DSM 5812 / JCM 6584 / H10) (Clostridium cellulolyticum).